Here is a 469-residue protein sequence, read N- to C-terminus: Proline--tRNA ligase (469 aa).

It belongs to the class-II aminoacyl-tRNA synthetase family. ProS type 3 subfamily. Homodimer.

It is found in the cytoplasm. It catalyses the reaction tRNA(Pro) + L-proline + ATP = L-prolyl-tRNA(Pro) + AMP + diphosphate. Functionally, catalyzes the attachment of proline to tRNA(Pro) in a two-step reaction: proline is first activated by ATP to form Pro-AMP and then transferred to the acceptor end of tRNA(Pro). The polypeptide is Proline--tRNA ligase (Methanosphaera stadtmanae (strain ATCC 43021 / DSM 3091 / JCM 11832 / MCB-3)).